The chain runs to 328 residues: Twinfilin (328 aa).

The 137-residue stretch at 1 to 137 (MSASVELKPT…DYQQIMKSLS (137 aa)) folds into the ADF-H 1 domain. Ser143 carries the post-translational modification Phosphoserine. Positions 173–304 (GVAMSIDDKA…TEKEILHAAG (132 aa)) constitute an ADF-H 2 domain. The interval 302–328 (AAGISSPQAETSTTKTGFSRPRPPRRR) is disordered. A compositionally biased stretch (polar residues) spans 306–318 (SSPQAETSTTKTG).

Belongs to the actin-binding proteins ADF family. Twinfilin subfamily. Interacts with G-actin; ADP-actin form.

The protein resides in the cytoplasm. It localises to the cytoskeleton. Its function is as follows. Actin-binding protein involved in motile and morphological processes. Inhibits actin polymerization, likely by sequestering G-actin. Prevents actin filament assembly by forming a 1:1 complex with actin monomers, and inhibits the nucleotide exchange reaction of actin monomers. The protein is Twinfilin (twf1) of Schizosaccharomyces pombe (strain 972 / ATCC 24843) (Fission yeast).